Consider the following 658-residue polypeptide: Transcription factor cep-1 (658 aa).

A DNA-binding region spans residues 238-428; sequence EEWLTFEVKK…RDWKNFCEKR (191 aa). Residues cysteine 319, histidine 322, cysteine 375, and cysteine 379 each contribute to the Zn(2+) site. Residues 450–477 form a disordered region; sequence QSSLHSGPSSPEKVTDTSQMFQSTSSSS. Residues 466 to 476 are compositionally biased toward low complexity; sequence TSQMFQSTSSS. The tract at residues 535 to 564 is required for tertiary structure stability of the protein; the sequence is QYGLQRQVKLSEKEYSKFVAFFAKEGENEI.

The protein belongs to the p53 family. As to quaternary structure, homodimer. Interacts (via C-terminus domain) with prmt-5; not methylated by prmt-5. Interacts with cbp-1 (via HAT domain); cep-1 transcriptional activity may be inhibited by interaction with methylated cbp-1. Component of a complex that contains prmt-5 and cbp-1. Interacts with ape-1; the interaction inhibits pro-apoptotic activity of cep-1. Requires Zn(2+) as cofactor. Post-translationally, phosphorylated in response to IR-induced DNA damage which is thought to be mediated by akt-1.

It localises to the nucleus. Transcriptional activator that binds the same DNA consensus sequence as p53. Has a role in normal development to ensure proper meiotic chromosome segregation. Promotes apoptosis under conditions of cellular and genotoxic stress in response to DNA damage, hypoxia, or starvation. However, not required for DNA repair in response to UV-C or to regulate cell-cycle progression. Regulates germline apoptosis in response to DNA damage. Required for induction of ced-13 in response to DNA damage. Its pro-apoptotic activity is inhibited when bound to ape-1 in vitro. Regulates germline proliferation by activating phg-1. Regulates DNA damage-induced apoptosis by inducing transcription of the programmed cell death activator egl-1. Negatively regulates lifespan. The sequence is that of Transcription factor cep-1 from Caenorhabditis briggsae.